A 500-amino-acid chain; its full sequence is MSIVDVRTPDPKRFIPGATGDWEVIIGLEVHAQVLSNSKLFSGASTEFGNAPNANVSLVDAAMPGMLPVINEECVKQAVRTGLGLKAKINRRSIFDRKNYFYPDLPQGYQISQYKDPIVGEGKIIISIGPDRQGQFEDVEIGIERLHLEQDAGKSMHDQHPSMSYVDLNRSGVALMEIVSKPDLRSSDEAKAYLTKLRSILRYLGTCDGNMDEGSMRADVNVSVRRPGAAFGTRCEIKNVNSIRFVGQAIEYEARRQIGILEDGGTIDQETRLFDPNKGETRSMRSKEDAHDYRYFPDPDLLPLEFDDAFVEALKTDLPELPDDKKDRFVRDLGLSVYDASVLVSEKAIADYFEAVAEGRDGKIAANWVINDLLGALNKAGKTIEETPVSPAQLGGVIDLIKAGTISGKLAKDLFEILWNEGGDPAEIVESRGMKQVTDTGAIEKAVDEIIAANPDQVEKAKAKPSLAGWFVGQVMKATGGKANPQAVQALVKSKLGIEE.

Belongs to the GatB/GatE family. GatB subfamily. As to quaternary structure, heterotrimer of A, B and C subunits.

The enzyme catalyses L-glutamyl-tRNA(Gln) + L-glutamine + ATP + H2O = L-glutaminyl-tRNA(Gln) + L-glutamate + ADP + phosphate + H(+). The catalysed reaction is L-aspartyl-tRNA(Asn) + L-glutamine + ATP + H2O = L-asparaginyl-tRNA(Asn) + L-glutamate + ADP + phosphate + 2 H(+). Its function is as follows. Allows the formation of correctly charged Asn-tRNA(Asn) or Gln-tRNA(Gln) through the transamidation of misacylated Asp-tRNA(Asn) or Glu-tRNA(Gln) in organisms which lack either or both of asparaginyl-tRNA or glutaminyl-tRNA synthetases. The reaction takes place in the presence of glutamine and ATP through an activated phospho-Asp-tRNA(Asn) or phospho-Glu-tRNA(Gln). This Sinorhizobium fredii (strain NBRC 101917 / NGR234) protein is Aspartyl/glutamyl-tRNA(Asn/Gln) amidotransferase subunit B.